A 350-amino-acid chain; its full sequence is uncharacterized protein (350 aa).

This is an uncharacterized protein from Sulfolobus islandicus filamentous virus (isolate Iceland/Hveragerdi) (SIFV).